The chain runs to 309 residues: Dicarboxylate carrier UCP2 (309 aa).

At 1–16 the chain is on the mitochondrial intermembrane side; the sequence is MVGFKATDVPPTATVK. Solcar repeat units follow at residues 11 to 106, 114 to 203, and 212 to 297; these read PTAT…VKQF, AGIG…IKDT, and DDLP…LKRA. The tract at residues 16-63 is important for interaction with long-chain fatty acids; the sequence is KFLGAGTAACIADLITFPLDTAKVRLQIQGESQGLARTAASAQYRGVL. Residues 17-40 traverse the membrane as a helical segment; that stretch reads FLGAGTAACIADLITFPLDTAKVR. The Mitochondrial matrix segment spans residues 41–77; it reads LQIQGESQGLARTAASAQYRGVLGTILTMVRTEGPRS. Residues 78–103 traverse the membrane as a helical segment; it reads LYNGLVAGLQRQMSFASVRIGLYDSV. Topologically, residues 104-119 are mitochondrial intermembrane; sequence KQFYTKGSEHAGIGSR. The chain crosses the membrane as a helical span at residues 120–145; it reads LLAGSTTGALAVAVAQPTDVVKVRFQ. Over 146–173 the chain is Mitochondrial matrix; the sequence is AQARAGGGRRYQSTVEAYKTIAREEGIR. Residues 174–199 traverse the membrane as a helical segment; it reads GLWKGTSPNVARNAIVNCTELVTYDL. The Mitochondrial intermembrane portion of the chain corresponds to 200-217; sequence IKDTLLKANLMTDDLPCH. Residues 218–242 traverse the membrane as a helical segment; the sequence is FTSAFGAGFCTTVIASPVDVVKTRY. The Mitochondrial matrix segment spans residues 243–268; that stretch reads MNSALGQYHSAGHCALTMLRKEGPRA. Residues 269-294 form a helical membrane-spanning segment; the sequence is FYKGFMPSFLRLGSWNVVMFVTYEQL. Residues 278 to 285 form an important for interaction with long-chain fatty acids region; sequence LRLGSWNV. At 295-309 the chain is on the mitochondrial intermembrane side; that stretch reads KRALMAAYESREAPF.

This sequence belongs to the mitochondrial carrier (TC 2.A.29) family. As to quaternary structure, homotetramer. Adopts an asymmetrical dimer of dimers functional form. Interacts with MICU1 (when methylated); leading to decrease the calcium sensitivity of MICU1. As to expression, expressed in a variety of organs, with predominant expression in the heart, lung and spleen.

It is found in the mitochondrion inner membrane. The enzyme catalyses L-aspartate(out) + phosphate(in) + H(+)(in) = L-aspartate(in) + phosphate(out) + H(+)(out). The catalysed reaction is oxaloacetate(out) + phosphate(in) + H(+)(in) = oxaloacetate(in) + phosphate(out) + H(+)(out). It catalyses the reaction (S)-malate(out) + phosphate(in) + H(+)(in) = (S)-malate(in) + phosphate(out) + H(+)(out). It carries out the reaction malonate(out) + phosphate(in) + H(+)(in) = malonate(in) + phosphate(out) + H(+)(out). The enzyme catalyses sulfate(out) + phosphate(in) + H(+)(in) = sulfate(in) + phosphate(out) + H(+)(out). The catalysed reaction is (S)-malate(out) = (S)-malate(in). It catalyses the reaction L-aspartate(out) = L-aspartate(in). It carries out the reaction phosphate(in) = phosphate(out). The enzyme catalyses chloride(in) = chloride(out). The catalysed reaction is H(+)(in) = H(+)(out). It catalyses the reaction a long-chain fatty acid(out) = a long-chain fatty acid(in). Antiporter that exports dicarboxylate intermediates of the Krebs cycle in exchange for phosphate plus a proton across the inner membrane of mitochondria, a process driven by mitochondrial motive force with an overall impact on glycolysis, glutaminolysis and glutathione-dependent redox balance. Continuous export of oxaloacetate and related four-carbon dicarboxylates from mitochondrial matrix into the cytosol negatively regulates the oxidation of acetyl-CoA substrates via the Krebs cycle lowering the ATP/ADP ratio and reactive oxygen species (ROS) production. May mediate inducible proton entry into the mitochondrial matrix affecting ATP turnover as a protection mechanism against oxidative stress. The proton currents are most likely associated with fatty acid flipping across the inner membrane of mitochondria in a metabolic process regulated by free fatty acids and purine nucleotides. Regulates the use of glucose as a source of energy. Required for glucose-induced DRP1-dependent mitochondrial fission and neuron activation in the ventromedial nucleus of the hypothalamus (VMH). This mitochondrial adaptation mechanism modulates the VMH pool of glucose-excited neurons with an impact on systemic glucose homeostasis. Regulates ROS levels and metabolic reprogramming of macrophages during the resolution phase of inflammation. Attenuates ROS production in response to IL33 to preserve the integrity of the Krebs cycle required for persistent production of itaconate and subsequent GATA3-dependent differentiation of inflammation-resolving alternatively activated macrophages. Can unidirectionally transport anions including L-malate, L-aspartate, phosphate and chloride ions. Does not mediate adaptive thermogenesis. The polypeptide is Dicarboxylate carrier UCP2 (Ucp2) (Rattus norvegicus (Rat)).